We begin with the raw amino-acid sequence, 97 residues long: Putative defensin-like protein 240 (97 aa).

Residues 1-23 (MRYTTSFIVFCFYIFLFTNLVQG) form the signal peptide. 4 disulfides stabilise this stretch: Cys29-Cys88, Cys39-Cys69, Cys47-Cys85, and Cys67-Cys87.

This sequence belongs to the DEFL family.

The protein resides in the secreted. The protein is Putative defensin-like protein 240 (SCRL18) of Arabidopsis thaliana (Mouse-ear cress).